Reading from the N-terminus, the 471-residue chain is G2/mitotic-specific cyclin-1 (471 aa).

It belongs to the cyclin family. Cyclin AB subfamily.

Its function is as follows. Essential for the control of the cell cycle at the G2/M (mitosis) transition. Interacts with the CDC2 protein kinase to form MPF. G2/M cyclins accumulate steadily during G2 and are abruptly destroyed at mitosis. The protein is G2/mitotic-specific cyclin-1 (CLB1) of Saccharomyces cerevisiae (strain ATCC 204508 / S288c) (Baker's yeast).